The chain runs to 306 residues: GTPase IMAP family member 1 (306 aa).

Residues 1–21 (MGGRKMATDEENVYGLEENAQ) are disordered. At 1-272 (MGGRKMATDE…RLWKWLKSPR (272 aa)) the chain is on the cytoplasmic side. Residues 25 to 229 (ESTRRLILVG…YSNEVYELAQ (205 aa)) enclose the AIG1-type G domain. The G1 stretch occupies residues 34-41 (GRTGAGKS). GTP is bound by residues 34 to 42 (GRTGAGKSA) and Ser55. Positions 61 to 65 (SVTRA) are G2. A G3 region spans residues 82–85 (DTPD). The tract at residues 152-155 (TRKE) is G4. Residues 153-155 (RKE) and Asn190 contribute to the GTP site. The segment at 189–191 (DNR) is G5. A helical; Anchor for type IV membrane protein membrane pass occupies residues 273 to 292 (SWRLGLALLLGGALLFWVLL). Residues 293–306 (HRRWSEAVAEVGPD) are Lumenal-facing.

This sequence belongs to the TRAFAC class TrmE-Era-EngA-EngB-Septin-like GTPase superfamily. AIG1/Toc34/Toc159-like paraseptin GTPase family. IAN subfamily. Predominantly expressed in the spleen and to a lesser extent in the lymph nodes. Detected in T-cells.

Its subcellular location is the endoplasmic reticulum membrane. It localises to the golgi apparatus membrane. Functionally, may regulate lymphocyte survival. Required for normal levels of mature T-lymphocytes and mature B-cells. In Homo sapiens (Human), this protein is GTPase IMAP family member 1 (GIMAP1).